A 427-amino-acid polypeptide reads, in one-letter code: UPF0229 protein bll6755 (427 aa).

Positions 86-107 (DYLQRSGQGSAKDSGPGEGDSE) are disordered.

This sequence belongs to the UPF0229 family.

This chain is UPF0229 protein bll6755, found in Bradyrhizobium diazoefficiens (strain JCM 10833 / BCRC 13528 / IAM 13628 / NBRC 14792 / USDA 110).